A 579-amino-acid chain; its full sequence is Probable receptor-like serine/threonine-protein kinase At5g57670 (579 aa).

The residue at position 256 (Thr-256) is a Phosphothreonine. In terms of domain architecture, Protein kinase spans 267 to 542; that stretch reads FHQGNIVGIG…LLTNGNEAEI (276 aa). Residues 273–281 and Lys-295 contribute to the ATP site; that span reads VGIGGYSEV. The Proton acceptor role is filled by Asp-392. Ser-396 is subject to Phosphoserine. Thr-432 is modified (phosphothreonine).

The protein belongs to the protein kinase superfamily. Ser/Thr protein kinase family.

It carries out the reaction L-seryl-[protein] + ATP = O-phospho-L-seryl-[protein] + ADP + H(+). The enzyme catalyses L-threonyl-[protein] + ATP = O-phospho-L-threonyl-[protein] + ADP + H(+). In Arabidopsis thaliana (Mouse-ear cress), this protein is Probable receptor-like serine/threonine-protein kinase At5g57670.